The following is a 288-amino-acid chain: Bifunctional protein FolD (288 aa).

NADP(+)-binding positions include Gly166–Ser168 and Ile232.

It belongs to the tetrahydrofolate dehydrogenase/cyclohydrolase family. In terms of assembly, homodimer.

The enzyme catalyses (6R)-5,10-methylene-5,6,7,8-tetrahydrofolate + NADP(+) = (6R)-5,10-methenyltetrahydrofolate + NADPH. It catalyses the reaction (6R)-5,10-methenyltetrahydrofolate + H2O = (6R)-10-formyltetrahydrofolate + H(+). It functions in the pathway one-carbon metabolism; tetrahydrofolate interconversion. Catalyzes the oxidation of 5,10-methylenetetrahydrofolate to 5,10-methenyltetrahydrofolate and then the hydrolysis of 5,10-methenyltetrahydrofolate to 10-formyltetrahydrofolate. This Salmonella heidelberg (strain SL476) protein is Bifunctional protein FolD.